The following is a 483-amino-acid chain: MAEFTPITIAYGDGIGPEIMEAVLYILRKAEARIRLETIEVGEKLYKKHYTSGISEESWESIQRTGIILKAPITTPQGGGYKSLNVTIRKTLQLFANIRPSVSFHPFTMTLHPHLNLTIIRENEEDLYAGIEYRQTHNMYESIKLISHTGCEKIIRYAFEYAVKNNRKKVTCLSKDNIMKFSDGVFHKIFNEIAKEYPQINNEHYIIDIGTARLATKPEIFDVIVTSNLYGDIISDVAAEISGSVGLAGSANIGQHYAMFEAVHGSAPDIAGKDIANPSGLLNAAIMMLVHIGQGDIASLIENAWKKTIEDGVHTADIYNEQNSSKKVGTKEFAEEVTKRLGQIPTKLPKADYPLIAEKQESNIDYKIDTNEVKKLVGTDIFVNMNISSAHDIADKINKLDLGNIELKTISSKGLKLWPRDTRFETISDHWCCRFMNKDGTEIKHLDITRLLEALSKANIDFIKVENLFEFDGVAGYSLAQGE.

Thr-74 contributes to the NADP(+) binding site. The D-threo-isocitrate site is built by Ser-83, Asn-85, Arg-89, Arg-99, and Arg-121. Asp-232 contacts Mg(2+). NADP(+)-binding positions include 264-270 (HGSAPDI) and Asn-277.

It belongs to the isocitrate and isopropylmalate dehydrogenases family. As to quaternary structure, homodimer. The cofactor is Mg(2+). Mn(2+) is required as a cofactor.

It catalyses the reaction D-threo-isocitrate + NADP(+) = 2-oxoglutarate + CO2 + NADPH. In terms of biological role, catalyzes the oxidative decarboxylation of isocitrate to 2-oxoglutarate and carbon dioxide with the concomitant reduction of NADP(+). This chain is Isocitrate dehydrogenase [NADP] (icd), found in Rickettsia felis (strain ATCC VR-1525 / URRWXCal2) (Rickettsia azadi).